Reading from the N-terminus, the 105-residue chain is Platelet factor 4 (105 aa).

The first 29 residues, 1–29, serve as a signal peptide directing secretion; it reads MSVAAVFRGLRPSPELLLLGLLFLPAVVA. Thr-31 carries O-linked (GalNAc...) threonine glycosylation. 2 cysteine pairs are disulfide-bonded: Cys-44–Cys-71 and Cys-46–Cys-87. Ser-61 bears the Phosphoserine mark. Residue 96 to 102 participates in heparin binding; sequence KKVIKKI.

This sequence belongs to the intercrine alpha (chemokine CxC) family. In terms of assembly, homotetramer. Interacts with TNFAIP6 (via Link domain). Interacts with CCR1. Interacts with CXCR3. Interacts with THBD; this interaction enhances generation of activated protein C.

It localises to the secreted. Functionally, chemokine released during platelet aggregation that plays a role in different biological processes including hematopoiesis, cell proliferation, differentiation, and activation. Acts via different functional receptors including CCR1, CXCR3A or CXCR3B. Upon interaction with CXCR3A receptor, induces activated T-lymphocytes migration mediated via downstream Ras/extracellular signal-regulated kinase (ERK) signaling. Neutralizes the anticoagulant effect of heparin by binding more strongly to heparin than to the chondroitin-4-sulfate chains of the carrier molecule. Plays a role in the inhibition of hematopoiesis and in the maintenance of hematopoietic stem cell (HSC) quiescence. Chemotactic for neutrophils and monocytes via CCR1. Inhibits endothelial cell proliferation. In cooperation with toll-like receptor 8/TLR8, induces chromatin remodeling and activates inflammatory gene expression via the TBK1-IRF5 axis. In addition, induces myofibroblast differentiation and collagen synthesis in different precursor cells, including endothelial cells, by stimulating endothelial-to-mesenchymal transition. Interacts with thrombomodulin/THBD to enhance the activation of protein C and thus potentiates its anticoagulant activity. This Mus musculus (Mouse) protein is Platelet factor 4 (Pf4).